The sequence spans 689 residues: Glycine--tRNA ligase beta subunit (689 aa).

Belongs to the class-II aminoacyl-tRNA synthetase family. As to quaternary structure, tetramer of two alpha and two beta subunits.

It is found in the cytoplasm. It carries out the reaction tRNA(Gly) + glycine + ATP = glycyl-tRNA(Gly) + AMP + diphosphate. This chain is Glycine--tRNA ligase beta subunit, found in Shewanella pealeana (strain ATCC 700345 / ANG-SQ1).